Here is a 1037-residue protein sequence, read N- to C-terminus: Ribonuclease E (1037 aa).

Disordered regions lie at residues 1-23, 47-90, and 106-369; these read MAED…LPER, FDGR…ETPV, and VSEA…PILS. Positions 47 to 67 are enriched in basic and acidic residues; sequence FDGRQRSAHSTVDKADAERVR. Low complexity-rich tracts occupy residues 68 to 90 and 106 to 126; these read AALT…ETPV and VSEA…PAAE. 2 stretches are compositionally biased toward acidic residues: residues 127–141 and 196–226; these read AEAE…EAET and VVDD…DDDQ. A compositionally biased stretch (basic residues) spans 230–242; that stretch reads PRRRRRGRRGRGR. The segment covering 248–284 has biased composition (acidic residues); the sequence is NDDATSDADTDSTEDQTDGDEQESGEDSDDSGDEDST. Residues 291–301 show a composition bias toward basic residues; it reads RRRRRRRRRKS. Basic and acidic residues predominate over residues 320-335; the sequence is VHERAPRTERSDKSDD. Residues 427 to 504 form the S1 motif domain; the sequence is GNIYLGIVQN…GHKGARLTTQ (78 aa). Residues 561–589 adopt a coiled-coil conformation; sequence EDIRSDVERLQKRWSEIEAKAAEVTEKKA. Residues D694 and D738 each coordinate Mg(2+). Zn(2+) contacts are provided by C796 and C799. Residues 810 to 1037 are disordered; it reads PIDSASSNGG…ARPAGPPSHD (228 aa). A compositionally biased stretch (basic residues) spans 834–843; it reads RRGKRGKKGA. Residues 844–864 show a composition bias toward basic and acidic residues; it reads ARTEEVHVAKVPDHTPGEHPM. The span at 879–891 shows a compositional bias: acidic residues; sequence EDHEDHEDHETAE. The segment covering 897-913 has biased composition (basic and acidic residues); it reads EVRDDTRDEHDADERAH. The segment covering 923–1006 has biased composition (acidic residues); that stretch reads GDEDLDDSDE…DSDSDEDEEP (84 aa).

This sequence belongs to the RNase E/G family. As to quaternary structure, assembles into a homotetramer formed by a dimer of dimers. Interacts with DNA-binding protein HhupB. Mg(2+) is required as a cofactor. Requires Zn(2+) as cofactor.

The protein resides in the cytoplasm. It catalyses the reaction Endonucleolytic cleavage of single-stranded RNA in A- and U-rich regions.. In terms of biological role, endoribonuclease that plays a central role in RNA processing and decay. Plays a major role in pre-16S rRNA maturation, probably generating the mature 5'-end, and a minor role in pre-5S and pre-23S rRNA maturation. Probably also processes tRNA. RNase E and HupB jointly contribute to cellular adaptation to changing growth conditions and survival during antibiotic treatment. Overexpression or depletion leads to changes in gene expression; overexpression induces metabolic slowdown and cell stress while depleted strains grow less well than induced strains. The polypeptide is Ribonuclease E (rne) (Mycolicibacterium smegmatis (strain ATCC 700084 / mc(2)155) (Mycobacterium smegmatis)).